The sequence spans 43 residues: Protein PsbN (43 aa).

The helical transmembrane segment at 7-27 (LIVAIAAVTICITAFAIYTAF) threads the bilayer.

This sequence belongs to the PsbN family.

The protein localises to the cellular thylakoid membrane. Its function is as follows. May play a role in photosystem I and II biogenesis. In Synechococcus sp. (strain JA-2-3B'a(2-13)) (Cyanobacteria bacterium Yellowstone B-Prime), this protein is Protein PsbN.